We begin with the raw amino-acid sequence, 459 residues long: FBD-associated F-box protein At4g13985 (459 aa).

Residues 18-64 (VDRLRNLPDCLLFKILLNLPTKDVVKLSVLSRRWRNVWRYVPGLDLE) form the F-box domain. Residues 375-429 (KEGANILPGPRRFLTSLEYVKIAKPMAAEASEIKLKLVSYFLENSTILKKLTLCL) form the FBD domain.

This Arabidopsis thaliana (Mouse-ear cress) protein is FBD-associated F-box protein At4g13985.